The primary structure comprises 146 residues: Mite group 2 allergen Der p 2 (146 aa).

Residues Met-1–Arg-17 form the signal peptide. Disulfide bonds link Cys-25–Cys-136, Cys-38–Cys-44, and Cys-90–Cys-95.

Belongs to the NPC2 family.

The protein resides in the secreted. In Dermatophagoides pteronyssinus (European house dust mite), this protein is Mite group 2 allergen Der p 2 (DERP2).